The following is a 240-amino-acid chain: MLKLLRIFLVLICCILICVLGTIYSFIRFKNPSNVGIVARWFGRLYPLFGLKVEHRIPQDQKQISRAIYIGNHQNNYDMVTISYMVQPRTVSVGKKSLIWIPFFGILYWVTGNIFLDRENRTKAHNTMSQLARRINEDNLSIWMFPEGTRNRGRGLLPFKTGAFHAAISAGVPIIPVVCSSTHNKINLNRWDNGKVICEIMDPIDVSGYTKDNVRDLAAYCHDLMEKRIAELDEEIAKGN.

The HXXXXD motif motif lies at 73-78; it reads HQNNYD.

This sequence belongs to the 1-acyl-sn-glycerol-3-phosphate acyltransferase family.

It localises to the cell inner membrane. The catalysed reaction is a 1-acyl-sn-glycero-3-phosphate + an acyl-CoA = a 1,2-diacyl-sn-glycero-3-phosphate + CoA. Its pathway is phospholipid metabolism; CDP-diacylglycerol biosynthesis; CDP-diacylglycerol from sn-glycerol 3-phosphate: step 2/3. Its function is as follows. Converts lysophosphatidic acid (LPA) into phosphatidic acid by incorporating acyl moiety at the 2 position. This Haemophilus influenzae (strain ATCC 51907 / DSM 11121 / KW20 / Rd) protein is 1-acyl-sn-glycerol-3-phosphate acyltransferase (plsC).